The primary structure comprises 121 residues: Oxalate-binding protein (121 aa).

In terms of domain architecture, Cupin type-2 spans 49 to 117 (RMKLPPGSSV…GNTDLEFLAV (69 aa)). Mn(2+) contacts are provided by H61, H63, and E68. Residue Y70 participates in oxalate binding. H102 contributes to the Mn(2+) binding site.

Homodimer.

Binds oxalate. The chain is Oxalate-binding protein from Thermotoga maritima (strain ATCC 43589 / DSM 3109 / JCM 10099 / NBRC 100826 / MSB8).